The primary structure comprises 525 residues: cAMP-dependent protein kinase regulatory subunit (525 aa).

The interval Gln28–Leu213 is dimerization and phosphorylation. Disordered regions lie at residues Met114–Gly146 and Ser170–Pro196. The segment covering Pro124–Gly146 has biased composition (low complexity). Residue Ser170 is modified to Phosphoserine; by autocatalysis. A nucleoside 3',5'-cyclic phosphate contacts are provided by residues Leu214 to Asp345 and Leu348 to Asp472. Positions 295, 304, and 417 each coordinate 3',5'-cyclic AMP. The tract at residues Ser497–Ala525 is disordered.

It belongs to the cAMP-dependent kinase regulatory chain family. Tetramer, composed of 2 regulatory (R) and 2 catalytic (C) subunits. In the presence of cAMP it dissociates into 2 active monomeric C subunits and an R dimer.

The sequence is that of cAMP-dependent protein kinase regulatory subunit (PKAR) from Mycosarcoma maydis (Corn smut fungus).